A 397-amino-acid chain; its full sequence is Phosphonopyruvate decarboxylase (397 aa).

This sequence belongs to the TPP enzyme family. The cofactor is thiamine diphosphate. Mg(2+) is required as a cofactor.

The catalysed reaction is 3-phosphonopyruvate + H(+) = phosphonoacetaldehyde + CO2. Its pathway is secondary metabolite biosynthesis; bialaphos biosynthesis. Involved in the biosynthesis of phosphinothricin tripeptide (PTT), also known as bialaphos (BA), a natural-product antibiotic and potent herbicide. Catalyzes the decarboxylation of phosphonopyruvate (PnPy) to generate phosphonoacetaldehyde (PnAA). The protein is Phosphonopyruvate decarboxylase of Streptomyces viridochromogenes (strain DSM 40736 / JCM 4977 / BCRC 1201 / Tue 494).